Reading from the N-terminus, the 88-residue chain is Cell division topological specificity factor (88 aa).

It belongs to the MinE family.

Prevents the cell division inhibition by proteins MinC and MinD at internal division sites while permitting inhibition at polar sites. This ensures cell division at the proper site by restricting the formation of a division septum at the midpoint of the long axis of the cell. The polypeptide is Cell division topological specificity factor (Acidovorax ebreus (strain TPSY) (Diaphorobacter sp. (strain TPSY))).